A 157-amino-acid chain; its full sequence is Nucleoside diphosphate kinase (157 aa).

Residues Lys-12, Phe-60, Arg-88, Thr-94, and Arg-105 each coordinate ATP. Residue His-121 is the Pros-phosphohistidine intermediate of the active site.

The protein belongs to the NDK family. Requires Mg(2+) as cofactor.

It localises to the cytoplasm. It catalyses the reaction a 2'-deoxyribonucleoside 5'-diphosphate + ATP = a 2'-deoxyribonucleoside 5'-triphosphate + ADP. The catalysed reaction is a ribonucleoside 5'-diphosphate + ATP = a ribonucleoside 5'-triphosphate + ADP. Major role in the synthesis of nucleoside triphosphates other than ATP. The ATP gamma phosphate is transferred to the NDP beta phosphate via a ping-pong mechanism, using a phosphorylated active-site intermediate. This chain is Nucleoside diphosphate kinase, found in Pyrococcus horikoshii (strain ATCC 700860 / DSM 12428 / JCM 9974 / NBRC 100139 / OT-3).